The primary structure comprises 1084 residues: Histone deacetylase 4 (1084 aa).

Residues 67–177 adopt a coiled-coil conformation; that stretch reads REQQLQQELL…STEVKMKLQE (111 aa). The interval 118 to 313 is interaction with MEF2A; sequence MLAMKHQQEL…NNSSGSVSAE (196 aa). The span at 133–163 shows a compositional bias: basic and acidic residues; that stretch reads KLERHRQEQELEKQHREQKLQQLKNKEKGKE. Disordered stretches follow at residues 133 to 166, 206 to 226, and 240 to 315; these read KLERHRQEQELEKQHREQKLQQLKNKEKGKESAV, TQHSSLDQSSPPQSGVSTSYN, and PLRK…AENG. Phosphoserine is present on S210. S246 is modified (phosphoserine; by CaMK4 and SIK1). The segment covering 259–274 has biased composition (basic and acidic residues); it reads KVAERRSSPLLRRKDG. Residues 290–312 are compositionally biased toward low complexity; sequence SACSSAPGSGPSSPNNSSGSVSA. The short motif at 349-354 is the PxLPxI/L motif; mediates interaction with ANKRA2 and 14-3-3 proteins element; that stretch reads PSLPNI. The residue at position 350 (S350) is a Phosphoserine. The residue at position 467 (S467) is a Phosphoserine; by CaMK4 and SIK1. Disordered regions lie at residues 509–531, 548–585, and 626–646; these read PKPSEPARQPESHPEETEEELRE, KEAHAQAGVQVKQEPIESDEEEAEPPREVEPGQRQPSE, and PLSRAQSSPASATFPVSVQEP. Basic and acidic residues predominate over residues 516–531; the sequence is RQPESHPEETEEELRE. A Glycyl lysine isopeptide (Lys-Gly) (interchain with G-Cter in SUMO) cross-link involves residue K559. The residue at position 565 (S565) is a Phosphoserine. Residues 629 to 641 show a composition bias toward polar residues; that stretch reads RAQSSPASATFPV. Position 632 is a phosphoserine; by CaMK4 (S632). S633 bears the Phosphoserine mark. Positions 655-1084 are histone deacetylase; it reads GLVYDTLMLK…EEPMEEEPPL (430 aa). Zn(2+)-binding residues include C667, C669, H675, and C751. H803 is an active-site residue. A Nuclear export signal motif is present at residues 1051 to 1084; the sequence is EEAETVTAMASLSVGVKPAEKRPDEEPMEEEPPL. Residues 1061–1084 are disordered; sequence SLSVGVKPAEKRPDEEPMEEEPPL.

Belongs to the histone deacetylase family. HD type 2 subfamily. In terms of assembly, homodimer. Homodimerization via its N-terminal domain. Interacts with MEF2A. Interacts with MEF2C and MEF2D. Interacts with AHRR. Interacts with NR2C1. Interacts with HDAC7. Interacts with a 14-3-3 chaperone proteins in a phosphorylation dependent manner. Interacts with 14-3-3 protein YWHAB. Interacts with BTBD14B. Interacts with KDM5B. Interacts with MYOCD. Interacts with MORC2. Interacts (via PxLPxI/L motif) with ANKRA2 (via ankyrin repeats). Interacts with CUL7 (as part of the 3M complex); negatively regulated by ANKRA2. Interacts with EP300 in the presence of TFAP2C. Interacts with HSPA1A and HSPA1B leading to their deacetylation at 'Lys-77'. Interacts with ZBTB7B; the interaction allows the recruitment of HDAC4 on CD8 loci for deacetylation and possible inhibition of CD8 genes expression. Interacts with DHX36. Interacts with SIK3; this interaction leads to HDAC4 retention in the cytoplasm. Interacts with ZNF638. Post-translationally, phosphorylated by CaMK4 at Ser-246, Ser-467 and Ser-632. Phosphorylation at other residues by CaMK2D is required for the interaction with 14-3-3. Phosphorylation at Ser-350, within the PxLPxI/L motif, impairs the binding of ANKRA2 but generates a high-affinity docking site for 14-3-3. In terms of processing, sumoylation on Lys-559 is promoted by the E3 SUMO-protein ligase RANBP2, and prevented by phosphorylation by CaMK4. As to expression, ubiquitous.

It localises to the nucleus. The protein resides in the cytoplasm. The enzyme catalyses N(6)-acetyl-L-lysyl-[histone] + H2O = L-lysyl-[histone] + acetate. In terms of biological role, responsible for the deacetylation of lysine residues on the N-terminal part of the core histones (H2A, H2B, H3 and H4). Histone deacetylation gives a tag for epigenetic repression and plays an important role in transcriptional regulation, cell cycle progression and developmental events. Histone deacetylases act via the formation of large multiprotein complexes. Involved in muscle maturation via its interaction with the myocyte enhancer factors such as MEF2A, MEF2C and MEF2D. Involved in the MTA1-mediated epigenetic regulation of ESR1 expression in breast cancer. Deacetylates HSPA1A and HSPA1B at 'Lys-77' leading to their preferential binding to co-chaperone STUB1. This is Histone deacetylase 4 from Homo sapiens (Human).